The primary structure comprises 292 residues: NAD kinase (292 aa).

The active-site Proton acceptor is the Asp-73. Residues 73 to 74 (DG), 147 to 148 (NE), His-158, Arg-175, Asp-177, 188 to 193 (TAYSLS), and Gln-247 contribute to the NAD(+) site.

This sequence belongs to the NAD kinase family. The cofactor is a divalent metal cation.

It is found in the cytoplasm. The catalysed reaction is NAD(+) + ATP = ADP + NADP(+) + H(+). In terms of biological role, involved in the regulation of the intracellular balance of NAD and NADP, and is a key enzyme in the biosynthesis of NADP. Catalyzes specifically the phosphorylation on 2'-hydroxyl of the adenosine moiety of NAD to yield NADP. In Klebsiella pneumoniae subsp. pneumoniae (strain ATCC 700721 / MGH 78578), this protein is NAD kinase.